A 176-amino-acid polypeptide reads, in one-letter code: Large ribosomal subunit protein eL20 (176 aa).

Lysine 11 is covalently cross-linked (Glycyl lysine isopeptide (Lys-Gly) (interchain with G-Cter in SUMO2)). Tyrosine 63 bears the Phosphotyrosine mark. Serine 71 is subject to Phosphoserine. Lysine 76 is modified (N6-succinyllysine). Position 123 is a phosphoserine (serine 123). Glycyl lysine isopeptide (Lys-Gly) (interchain with G-Cter in SUMO2) cross-links involve residues lysine 128 and lysine 170.

Belongs to the eukaryotic ribosomal protein eL20 family. In terms of assembly, component of the large ribosomal subunit. Binds IPO9 with high affinity.

The protein resides in the cytoplasm. Functionally, component of the large ribosomal subunit. The ribosome is a large ribonucleoprotein complex responsible for the synthesis of proteins in the cell. This is Large ribosomal subunit protein eL20 (RPL18A) from Bos taurus (Bovine).